The primary structure comprises 1372 residues: DNA-directed RNA polymerase subunit beta (1372 aa).

Belongs to the RNA polymerase beta chain family. As to quaternary structure, the RNAP catalytic core consists of 2 alpha, 1 beta, 1 beta' and 1 omega subunit. When a sigma factor is associated with the core the holoenzyme is formed, which can initiate transcription.

It carries out the reaction RNA(n) + a ribonucleoside 5'-triphosphate = RNA(n+1) + diphosphate. DNA-dependent RNA polymerase catalyzes the transcription of DNA into RNA using the four ribonucleoside triphosphates as substrates. The protein is DNA-directed RNA polymerase subunit beta of Nitratidesulfovibrio vulgaris (strain DSM 19637 / Miyazaki F) (Desulfovibrio vulgaris).